A 125-amino-acid polypeptide reads, in one-letter code: MDLMCKKMKHLWFFLLLVAAPRWVLSQLQLQESGPGLVKPSETLSLTCTVSGGSISSSSYYWGWIRQPPGKGLEWIGSIYYSGSTYYNPSLKSRVTISVDTSKNQFSLKLSSVTAADTAVYYCAR.

The signal sequence occupies residues 1 to 26; it reads MDLMCKKMKHLWFFLLLVAAPRWVLS. The interval 27–51 is framework-1; the sequence is QLQLQESGPGLVKPSETLSLTCTVS. Positions 27–125 constitute an Ig-like domain; that stretch reads QLQLQESGPG…ADTAVYYCAR (99 aa). An intrachain disulfide couples Cys-48 to Cys-123. Residues 52–61 form a complementarity-determining-1 region; the sequence is GGSISSSSYY. A framework-2 region spans residues 62-78; the sequence is WGWIRQPPGKGLEWIGS. The interval 79–85 is complementarity-determining-2; that stretch reads IYYSGST. The segment at 86 to 123 is framework-3; sequence YYNPSLKSRVTISVDTSKNQFSLKLSSVTAADTAVYYC. Residues 124–125 are complementarity-determining-3; the sequence is AR.

In terms of assembly, immunoglobulins are composed of two identical heavy chains and two identical light chains; disulfide-linked.

It localises to the secreted. It is found in the cell membrane. Its function is as follows. V region of the variable domain of immunoglobulin heavy chains that participates in the antigen recognition. Immunoglobulins, also known as antibodies, are membrane-bound or secreted glycoproteins produced by B lymphocytes. In the recognition phase of humoral immunity, the membrane-bound immunoglobulins serve as receptors which, upon binding of a specific antigen, trigger the clonal expansion and differentiation of B lymphocytes into immunoglobulins-secreting plasma cells. Secreted immunoglobulins mediate the effector phase of humoral immunity, which results in the elimination of bound antigens. The antigen binding site is formed by the variable domain of one heavy chain, together with that of its associated light chain. Thus, each immunoglobulin has two antigen binding sites with remarkable affinity for a particular antigen. The variable domains are assembled by a process called V-(D)-J rearrangement and can then be subjected to somatic hypermutations which, after exposure to antigen and selection, allow affinity maturation for a particular antigen. This chain is Immunoglobulin heavy variable 4-39, found in Homo sapiens (Human).